The chain runs to 505 residues: Chemotaxis regulatory protein ChePep (505 aa).

Disordered regions lie at residues 154–403 (EPNN…EDIP) and 420–465 (EAVA…SSPL). Basic and acidic residues-rich tracts occupy residues 172 to 263 (EEVK…EKTQ), 289 to 311 (ENKEKTQESAEIPQDKEIQEVVT), 337 to 346 (QAHELEKQEI), 359 to 373 (QDKEVQELEIPKEET), and 386 to 398 (PQEKETQEDHYES). Residues 440-451 (TETSKNENNTET) show a composition bias toward low complexity.

Interacts with CheZ; the interaction is essential for each other polar localization.

The protein resides in the cytoplasm. In terms of biological role, plays an essential role in chemotaxis. Regulates flagellar rotation through the formation of a complex with chemotaxis protein CheZ. Plays a major role in colonization of the stomach. In Helicobacter pylori (strain ATCC 700392 / 26695) (Campylobacter pylori), this protein is Chemotaxis regulatory protein ChePep.